A 438-amino-acid chain; its full sequence is 23S rRNA (uracil(1939)-C(5))-methyltransferase RlmD (438 aa).

The TRAM domain occupies 11 to 69 (LQPESKHQQVLVEKLDHQGAGIAYLNKKPLFIDGTLPGEEVVTQLTESKSKFARGKLIK). [4Fe-4S] cluster is bound by residues cysteine 82, cysteine 88, cysteine 91, and cysteine 169. S-adenosyl-L-methionine-binding residues include glutamine 272, phenylalanine 301, asparagine 306, glutamate 322, asparagine 349, and aspartate 370. Cysteine 396 (nucleophile) is an active-site residue.

This sequence belongs to the class I-like SAM-binding methyltransferase superfamily. RNA M5U methyltransferase family. RlmD subfamily.

The enzyme catalyses uridine(1939) in 23S rRNA + S-adenosyl-L-methionine = 5-methyluridine(1939) in 23S rRNA + S-adenosyl-L-homocysteine + H(+). Functionally, catalyzes the formation of 5-methyl-uridine at position 1939 (m5U1939) in 23S rRNA. The chain is 23S rRNA (uracil(1939)-C(5))-methyltransferase RlmD from Vibrio vulnificus (strain YJ016).